The chain runs to 448 residues: 3-phosphoshikimate 1-carboxyvinyltransferase (448 aa).

The 3-phosphoshikimate site is built by Lys-38, Ser-39, and Arg-43. Position 38 (Lys-38) interacts with phosphoenolpyruvate. 2 residues coordinate phosphoenolpyruvate: Gly-111 and Arg-140. The 3-phosphoshikimate site is built by Ser-185, Gln-187, Asp-335, and Lys-362. Position 187 (Gln-187) interacts with phosphoenolpyruvate. The active-site Proton acceptor is the Asp-335. Phosphoenolpyruvate-binding residues include Arg-366 and Arg-408.

It belongs to the EPSP synthase family. Monomer.

The protein resides in the cytoplasm. The enzyme catalyses 3-phosphoshikimate + phosphoenolpyruvate = 5-O-(1-carboxyvinyl)-3-phosphoshikimate + phosphate. Its pathway is metabolic intermediate biosynthesis; chorismate biosynthesis; chorismate from D-erythrose 4-phosphate and phosphoenolpyruvate: step 6/7. Its function is as follows. Catalyzes the transfer of the enolpyruvyl moiety of phosphoenolpyruvate (PEP) to the 5-hydroxyl of shikimate-3-phosphate (S3P) to produce enolpyruvyl shikimate-3-phosphate and inorganic phosphate. In Synechococcus elongatus (strain ATCC 33912 / PCC 7942 / FACHB-805) (Anacystis nidulans R2), this protein is 3-phosphoshikimate 1-carboxyvinyltransferase.